A 217-amino-acid polypeptide reads, in one-letter code: Harpin secretion protein HrcR (217 aa).

Transmembrane regions (helical) follow at residues 11 to 31, 52 to 72, 158 to 178, and 185 to 205; these read FALF…CTCF, PNMA…APVF, IGFL…NVLL, and VAPM…INGW.

The protein belongs to the FliP/MopC/SpaP family.

Its subcellular location is the cell membrane. In terms of biological role, required for the secretion of harpin. The sequence is that of Harpin secretion protein HrcR (hrcR) from Erwinia amylovora (Fire blight bacteria).